Consider the following 400-residue polypeptide: Enoyl-[acyl-carrier-protein] reductase [NADH] 1 (400 aa).

NAD(+) contacts are provided by residues 48–53 (GSSSGY), 74–75 (FE), 111–112 (DA), and 139–140 (LA). A substrate-binding site is contributed by Tyr225. Tyr235 functions as the Proton donor in the catalytic mechanism. Residues Lys244 and 273–275 (VVT) contribute to the NAD(+) site.

The protein belongs to the TER reductase family. As to quaternary structure, monomer.

The catalysed reaction is a 2,3-saturated acyl-[ACP] + NAD(+) = a (2E)-enoyl-[ACP] + NADH + H(+). It participates in lipid metabolism; fatty acid biosynthesis. Its function is as follows. Involved in the final reduction of the elongation cycle of fatty acid synthesis (FAS II). Catalyzes the reduction of a carbon-carbon double bond in an enoyl moiety that is covalently linked to an acyl carrier protein (ACP). In Photobacterium profundum (strain SS9), this protein is Enoyl-[acyl-carrier-protein] reductase [NADH] 1.